The following is a 369-amino-acid chain: tRNA-specific 2-thiouridylase MnmA (369 aa).

ATP-binding positions include 12–19 and methionine 38; that span reads GMSGGVDS. The segment at 98-100 is interaction with target base in tRNA; it reads NPD. Catalysis depends on cysteine 103, which acts as the Nucleophile. A disulfide bond links cysteine 103 and cysteine 200. Residue glycine 128 coordinates ATP. The interval 150-152 is interaction with tRNA; that stretch reads KDQ. The Cysteine persulfide intermediate role is filled by cysteine 200. Residues 312–313 form an interaction with tRNA region; the sequence is RY.

The protein belongs to the MnmA/TRMU family. In terms of assembly, interacts with TusE.

It is found in the cytoplasm. It catalyses the reaction S-sulfanyl-L-cysteinyl-[protein] + uridine(34) in tRNA + AH2 + ATP = 2-thiouridine(34) in tRNA + L-cysteinyl-[protein] + A + AMP + diphosphate + H(+). Catalyzes the 2-thiolation of uridine at the wobble position (U34) of tRNA(Lys), tRNA(Glu) and tRNA(Gln), leading to the formation of s(2)U34, the first step of tRNA-mnm(5)s(2)U34 synthesis. Sulfur is provided by IscS, via a sulfur-relay system. Binds ATP and its substrate tRNAs. The polypeptide is tRNA-specific 2-thiouridylase MnmA (Sodalis glossinidius (strain morsitans)).